The following is a 342-amino-acid chain: Ketol-acid reductoisomerase (NADP(+)) (342 aa).

The KARI N-terminal Rossmann domain maps to 2–181 (VKVYYNGDIK…GGARAGVLET (180 aa)). NADP(+) contacts are provided by residues 25–28 (YGSQ), R48, S52, and 82–85 (DEQQ). Residue H107 is part of the active site. NADP(+) is bound at residue G133. The KARI C-terminal knotted domain maps to 182–327 (TFKEETETDL…RQLREMMPFV (146 aa)). Mg(2+)-binding residues include D190, E194, E226, and E230. S251 contributes to the substrate binding site.

The protein belongs to the ketol-acid reductoisomerase family. Mg(2+) is required as a cofactor.

The catalysed reaction is (2R)-2,3-dihydroxy-3-methylbutanoate + NADP(+) = (2S)-2-acetolactate + NADPH + H(+). It carries out the reaction (2R,3R)-2,3-dihydroxy-3-methylpentanoate + NADP(+) = (S)-2-ethyl-2-hydroxy-3-oxobutanoate + NADPH + H(+). It functions in the pathway amino-acid biosynthesis; L-isoleucine biosynthesis; L-isoleucine from 2-oxobutanoate: step 2/4. The protein operates within amino-acid biosynthesis; L-valine biosynthesis; L-valine from pyruvate: step 2/4. Functionally, involved in the biosynthesis of branched-chain amino acids (BCAA). Catalyzes an alkyl-migration followed by a ketol-acid reduction of (S)-2-acetolactate (S2AL) to yield (R)-2,3-dihydroxy-isovalerate. In the isomerase reaction, S2AL is rearranged via a Mg-dependent methyl migration to produce 3-hydroxy-3-methyl-2-ketobutyrate (HMKB). In the reductase reaction, this 2-ketoacid undergoes a metal-dependent reduction by NADPH to yield (R)-2,3-dihydroxy-isovalerate. This Bacillus velezensis (strain DSM 23117 / BGSC 10A6 / LMG 26770 / FZB42) (Bacillus amyloliquefaciens subsp. plantarum) protein is Ketol-acid reductoisomerase (NADP(+)).